We begin with the raw amino-acid sequence, 141 residues long: Hemoglobin subunit beta-C(NA) (141 aa).

A Globin domain is found at 1–141 (PBKALITGFW…VASALAHRYH (141 aa)). The heme b site is built by His-58 and His-87.

It belongs to the globin family. In terms of assembly, heterotetramer of two alpha chains and two beta chains. As to expression, red blood cells.

Its function is as follows. Involved in oxygen transport from the lung to the various peripheral tissues. The polypeptide is Hemoglobin subunit beta-C(NA) (Ammotragus lervia (Barbary sheep)).